A 206-amino-acid polypeptide reads, in one-letter code: Ras-related protein Rab-18 (206 aa).

The GTP site is built by Ser-17, Gly-20, Lys-21, Ser-22, Ser-23, Asp-34, Pro-35, Thr-40, Gly-66, Lys-123, Asp-125, and Ala-152. Ser-22 contributes to the Mg(2+) binding site. 2 short sequence motifs (switch) span residues 31 to 45 (DTFD…GVDF) and 63 to 80 (DTAG…YYRG). Thr-40 is a binding site for Mg(2+). A lipid anchor (S-palmitoyl cysteine) is attached at Cys-199. Cys-203 carries the cysteine methyl ester modification. Cys-203 carries the S-geranylgeranyl cysteine lipid modification. Positions 204-206 (SML) are cleaved as a propeptide — removed in mature form.

The protein belongs to the small GTPase superfamily. Rab family. The cofactor is Mg(2+).

The protein localises to the endoplasmic reticulum membrane. It localises to the golgi apparatus. It is found in the cis-Golgi network membrane. Its subcellular location is the lipid droplet. The protein resides in the apical cell membrane. The enzyme catalyses GTP + H2O = GDP + phosphate + H(+). Regulated by guanine nucleotide exchange factors (GEFs) which promote the exchange of bound GDP for free GTP. Regulated by GTPase activating proteins (GAPs) which increase the GTP hydrolysis activity at the ER membrane. Inhibited by GDP dissociation inhibitors (GDIs) which prevent Rab-GDP dissociation. In terms of biological role, the small GTPases Rab are key regulators of intracellular membrane trafficking, from the formation of transport vesicles to their fusion with membranes. Rabs cycle between an inactive GDP-bound form and an active GTP-bound form that is able to recruit to membranes different sets of downstream effectors directly responsible for vesicle formation, movement, tethering and fusion. RAB18 is required for the localization of ZFYVE1 to lipid droplets and for its function in mediating the formation of endoplasmic reticulum-lipid droplets (ER-LD) contacts. Also required for maintaining endoplasmic reticulum structure. Plays a role in apical endocytosis/recycling. Plays a key role in eye and brain development and neurodegeneration. In Gallus gallus (Chicken), this protein is Ras-related protein Rab-18 (RAB18).